The chain runs to 166 residues: MTIVYLSLGTNMGDRAAYLQKALEALADLPQTRLLAQSSIYETTAWGKTGQADFLNMACQLDTQLTAADFLKETQAIEQSLGRVRHEKWGSRTIDIDILLFGEEVYDTKELKVPHPYMTERAFVLIPLLELQPDLKLPPNHKFLRDYLAALDQSDITLFSAQQTEF.

It belongs to the HPPK family.

It carries out the reaction 6-hydroxymethyl-7,8-dihydropterin + ATP = (7,8-dihydropterin-6-yl)methyl diphosphate + AMP + H(+). It functions in the pathway cofactor biosynthesis; tetrahydrofolate biosynthesis; 2-amino-4-hydroxy-6-hydroxymethyl-7,8-dihydropteridine diphosphate from 7,8-dihydroneopterin triphosphate: step 4/4. Catalyzes the transfer of pyrophosphate from adenosine triphosphate (ATP) to 6-hydroxymethyl-7,8-dihydropterin, an enzymatic step in folate biosynthesis pathway. This Streptococcus pyogenes serotype M1 protein is 2-amino-4-hydroxy-6-hydroxymethyldihydropteridine pyrophosphokinase (folK).